The sequence spans 514 residues: ATP synthase subunit alpha (514 aa).

170–177 (GDRQTGKT) is an ATP binding site.

This sequence belongs to the ATPase alpha/beta chains family. In terms of assembly, F-type ATPases have 2 components, CF(1) - the catalytic core - and CF(0) - the membrane proton channel. CF(1) has five subunits: alpha(3), beta(3), gamma(1), delta(1), epsilon(1). CF(0) has three main subunits: a(1), b(2) and c(9-12). The alpha and beta chains form an alternating ring which encloses part of the gamma chain. CF(1) is attached to CF(0) by a central stalk formed by the gamma and epsilon chains, while a peripheral stalk is formed by the delta and b chains.

The protein localises to the cell inner membrane. It carries out the reaction ATP + H2O + 4 H(+)(in) = ADP + phosphate + 5 H(+)(out). Functionally, produces ATP from ADP in the presence of a proton gradient across the membrane. The alpha chain is a regulatory subunit. This chain is ATP synthase subunit alpha, found in Psychrobacter arcticus (strain DSM 17307 / VKM B-2377 / 273-4).